The chain runs to 155 residues: Large ribosomal subunit protein uL22 (155 aa).

It belongs to the universal ribosomal protein uL22 family. In terms of assembly, part of the 50S ribosomal subunit.

In terms of biological role, this protein binds specifically to 23S rRNA. It makes multiple contacts with different domains of the 23S rRNA in the assembled 50S subunit and ribosome. The globular domain of the protein is located near the polypeptide exit tunnel on the outside of the subunit, while an extended beta-hairpin is found that lines the wall of the exit tunnel in the center of the 70S ribosome. The polypeptide is Large ribosomal subunit protein uL22 (Pyrococcus abyssi (strain GE5 / Orsay)).